Consider the following 443-residue polypeptide: Phosphoglucosamine mutase (443 aa).

The Phosphoserine intermediate role is filled by S102. The Mg(2+) site is built by S102, D241, D243, and D245. S102 carries the post-translational modification Phosphoserine.

Belongs to the phosphohexose mutase family. Mg(2+) is required as a cofactor. In terms of processing, activated by phosphorylation.

The catalysed reaction is alpha-D-glucosamine 1-phosphate = D-glucosamine 6-phosphate. Catalyzes the conversion of glucosamine-6-phosphate to glucosamine-1-phosphate. The protein is Phosphoglucosamine mutase of Acinetobacter baylyi (strain ATCC 33305 / BD413 / ADP1).